The following is a 163-amino-acid chain: Nucleotide-binding protein YajQ (163 aa).

Belongs to the YajQ family.

Functionally, nucleotide-binding protein. In Salmonella agona (strain SL483), this protein is Nucleotide-binding protein YajQ.